The primary structure comprises 367 residues: GTP cyclohydrolase FolE2 (367 aa).

This sequence belongs to the GTP cyclohydrolase IV family.

The catalysed reaction is GTP + H2O = 7,8-dihydroneopterin 3'-triphosphate + formate + H(+). The protein operates within cofactor biosynthesis; 7,8-dihydroneopterin triphosphate biosynthesis; 7,8-dihydroneopterin triphosphate from GTP: step 1/1. Functionally, converts GTP to 7,8-dihydroneopterin triphosphate. The chain is GTP cyclohydrolase FolE2 from Ruegeria sp. (strain TM1040) (Silicibacter sp.).